We begin with the raw amino-acid sequence, 224 residues long: tRNA (guanine-N(7)-)-methyltransferase (224 aa).

4 residues coordinate S-adenosyl-L-methionine: glutamate 54, glutamate 79, glutamate 106, and aspartate 129. Aspartate 129 is a catalytic residue. Residues lysine 133 and aspartate 165 each contribute to the substrate site.

The protein belongs to the class I-like SAM-binding methyltransferase superfamily. TrmB family.

The enzyme catalyses guanosine(46) in tRNA + S-adenosyl-L-methionine = N(7)-methylguanosine(46) in tRNA + S-adenosyl-L-homocysteine. The protein operates within tRNA modification; N(7)-methylguanine-tRNA biosynthesis. Functionally, catalyzes the formation of N(7)-methylguanine at position 46 (m7G46) in tRNA. This is tRNA (guanine-N(7)-)-methyltransferase from Chlamydia caviae (strain ATCC VR-813 / DSM 19441 / 03DC25 / GPIC) (Chlamydophila caviae).